The chain runs to 208 residues: Adenylyl-sulfate kinase (208 aa).

31–38 (GLSGSGKS) contributes to the ATP binding site. S105 functions as the Phosphoserine intermediate in the catalytic mechanism.

Belongs to the APS kinase family.

The catalysed reaction is adenosine 5'-phosphosulfate + ATP = 3'-phosphoadenylyl sulfate + ADP + H(+). The protein operates within sulfur metabolism; hydrogen sulfide biosynthesis; sulfite from sulfate: step 2/3. Catalyzes the synthesis of activated sulfate. The chain is Adenylyl-sulfate kinase from Pseudomonas entomophila (strain L48).